The sequence spans 325 residues: Apoptosis-enhancing nuclease (325 aa).

The Nucleolar localization signal motif lies at 27-35 (RKRHKRRSR). Residues 85-105 (RAGSGSAPCSRRPAPGKASGP) are disordered. The 157-residue stretch at 110–266 (CVAIDCEMVG…EDATTAMELY (157 aa)) folds into the Exonuclease domain. A Nuclear localization signal motif is present at residues 165 to 188 (RQHMRKAVPFQVAQKEILKLLKGK). The segment at 281 to 325 (LWTCPEDREPDSSTDMEQYMEDQYWPDDLAHGSRGGAREAQDRRN) is disordered. A compositionally biased stretch (basic and acidic residues) spans 308-325 (DLAHGSRGGAREAQDRRN).

The protein localises to the nucleus. The protein resides in the nucleolus. Functionally, exonuclease with activity against single- and double-stranded DNA and RNA. Mediates p53-induced apoptosis. When induced by p53 following DNA damage, digests double-stranded DNA to form single-stranded DNA and amplifies DNA damage signals, leading to enhancement of apoptosis. This Homo sapiens (Human) protein is Apoptosis-enhancing nuclease (AEN).